The chain runs to 253 residues: MSAAFRKAAKTRQREHRERSQPGFRKRLGLLEKKKDYKLRANDYHKKQDFLRALRKKALEKNPDEFYYKMTRAKLQDGVHIFKENKEEVTAEQLKLMRTQDIKYIEMKRVAEAKKIERLKSELHLLDFQGKQQKKHVFFFDTKKEVERFDVATHLQTAPELVDRVYNRPRIETLQKERVKGATPQTGLKRIAKERQKQYDCLTQRIEREKQLFVVAQKIQTRKDLMDKTQKVKVKKETVNSPAIYRFQTRRKR.

The interval 1–26 (MSAAFRKAAKTRQREHRERSQPGFRK) is disordered. Residues Lys-74, Lys-83, and Lys-86 each participate in a glycyl lysine isopeptide (Lys-Gly) (interchain with G-Cter in SUMO2) cross-link. Phosphothreonine is present on Thr-90. Glycyl lysine isopeptide (Lys-Gly) (interchain with G-Cter in SUMO2) cross-links involve residues Lys-103, Lys-120, Lys-143, Lys-144, Lys-180, Lys-218, Lys-235, and Lys-236. A Phosphoserine modification is found at Ser-241.

Belongs to the UTP11 family. Part of the small subunit (SSU) processome, composed of more than 70 proteins and the RNA chaperone small nucleolar RNA (snoRNA) U3.

Its subcellular location is the nucleus. It localises to the nucleolus. Its function is as follows. Part of the small subunit (SSU) processome, first precursor of the small eukaryotic ribosomal subunit. During the assembly of the SSU processome in the nucleolus, many ribosome biogenesis factors, an RNA chaperone and ribosomal proteins associate with the nascent pre-rRNA and work in concert to generate RNA folding, modifications, rearrangements and cleavage as well as targeted degradation of pre-ribosomal RNA by the RNA exosome. Involved in nucleolar processing of pre-18S ribosomal RNA. The sequence is that of Probable U3 small nucleolar RNA-associated protein 11 (Utp11) from Mus musculus (Mouse).